Reading from the N-terminus, the 823-residue chain is High affinity cAMP-specific and IBMX-insensitive 3',5'-cyclic phosphodiesterase 8A (823 aa).

The tract at residues 1 to 55 is disordered; sequence MGCAPSIHTSENRTFSHSDGEDEDVDVDVPGPAPRSIQRWSTAPGLVEPQPRDNG. Residues 10–19 are compositionally biased toward basic and acidic residues; it reads SENRTFSHSD. In terms of domain architecture, PAS spans 209–280; that stretch reads ACNSVFTALE…AINSCVTVDK (72 aa). Residues 283–325 form the PAC domain; that stretch reads QGVYHTQKKNGDNIQQNVKIIPVIGQGGKIRHYVSIIRVCNGN. A disordered region spans residues 338 to 373; that stretch reads DSQTDNQAGKHKDRRKHSMDAKAVSSRTSDVSSQRR. A Phosphoserine; by PKA modification is found at S355. Phosphoserine is present on residues S382 and S452. Y456 bears the Phosphotyrosine mark. Positions 475–814 constitute a PDEase domain; the sequence is SLHDVPPRIA…RYWKGLDEKK (340 aa). H551 functions as the Proton donor in the catalytic mechanism. A divalent metal cation contacts are provided by H555, H591, D592, and D720.

It belongs to the cyclic nucleotide phosphodiesterase family. PDE8 subfamily. As to quaternary structure, interacts with RAF1. The interaction promotes RAF1 activity. A divalent metal cation is required as a cofactor. In terms of processing, phosphorylated at Ser-355 by PKA under elevated cAMP conditions, this enhances catalytic activity. In terms of tissue distribution, expressed in multiple tissues, with highest levels in testis, followed by liver, heart, skeletal muscle, and kidney. In the testis, expressed specifically in the seminiferous tubules, in postmitotic pachytene spermatocytes. Low expression, if any, in lung, smooth muscle, pancreas, thyroid, thymus, submaxillary gland, spleen, prostate, epididymus, uterus.

It carries out the reaction 3',5'-cyclic AMP + H2O = AMP + H(+). Its pathway is purine metabolism; 3',5'-cyclic AMP degradation; AMP from 3',5'-cyclic AMP: step 1/1. Its activity is regulated as follows. Inhibited by dipyridimole. Insensitive to selective PDE inhibitor rolipram and to the non-selective inhibitor, IBMX. Its function is as follows. Hydrolyzes the second messenger cAMP, which is a key regulator of many important physiological processes. May be involved in maintaining basal levels of the cyclic nucleotide and/or in the cAMP regulation of germ cell development. Binding to RAF1 reduces RAF1 'Ser-259' inhibitory-phosphorylation and stimulates RAF1-dependent EGF-activated ERK-signaling. Protects against cell death induced by hydrogen peroxide and staurosporine. The sequence is that of High affinity cAMP-specific and IBMX-insensitive 3',5'-cyclic phosphodiesterase 8A (Pde8a) from Mus musculus (Mouse).